The chain runs to 322 residues: 4-diphosphocytidyl-2-C-methyl-D-erythritol kinase (322 aa).

Residue Lys-18 is part of the active site. Pro-130–Ser-140 is an ATP binding site. Residue Asp-172 is part of the active site.

The protein belongs to the GHMP kinase family. IspE subfamily.

It catalyses the reaction 4-CDP-2-C-methyl-D-erythritol + ATP = 4-CDP-2-C-methyl-D-erythritol 2-phosphate + ADP + H(+). Its pathway is isoprenoid biosynthesis; isopentenyl diphosphate biosynthesis via DXP pathway; isopentenyl diphosphate from 1-deoxy-D-xylulose 5-phosphate: step 3/6. Catalyzes the phosphorylation of the position 2 hydroxy group of 4-diphosphocytidyl-2C-methyl-D-erythritol. The chain is 4-diphosphocytidyl-2-C-methyl-D-erythritol kinase from Psychrobacter arcticus (strain DSM 17307 / VKM B-2377 / 273-4).